Reading from the N-terminus, the 1216-residue chain is ATP-dependent DNA helicase Q4 (1216 aa).

2 disordered regions span residues 72–100 (EAQE…QSLL) and 113–171 (NLKN…PRLG). Composition is skewed to polar residues over residues 86–100 (AATQ…QSLL) and 114–137 (LKNT…SLST). Phosphoserine is present on residues Ser179 and Ser181. Residues 235–340 (SEVSVQSPEA…LHASPRPASL (106 aa)) are disordered. Polar residues-rich tracts occupy residues 248–262 (QPAQ…SINS) and 306–320 (TQVN…SNQA). Residues 393 to 410 (DTCFRCGQFGHWASQCSQ) form a CCHC-type zinc finger. Positions 436–458 (AQRTGTASCHHSGEETQPAAPEL) are disordered. In terms of domain architecture, Helicase ATP-binding spans 506–684 (IMRILSGIST…AQHLGIAGEF (179 aa)). Residue 519–526 (LPTGAGKS) coordinates ATP. The DEAH box signature appears at 627-630 (DEVH). The Helicase C-terminal domain occupies 705–872 (DSDQALVTLL…AVKRLVQRVF (168 aa)). Cys875, Cys877, Cys906, and His909 together coordinate Zn(2+).

This sequence belongs to the helicase family. RecQ subfamily. Interacts with UBR1 and UBR2. Interacts with MCM10; this interaction regulates RECQL4 unwinding activity. Interacts with TOPBP1. The cofactor is Zn(2+).

It localises to the cytoplasm. Its subcellular location is the nucleus. It carries out the reaction Couples ATP hydrolysis with the unwinding of duplex DNA by translocating in the 3'-5' direction.. It catalyses the reaction ATP + H2O = ADP + phosphate + H(+). Its function is as follows. An ATP-dependent DNA helicase which unwinds dsDNA with a 3'-overhang in a 3'-5' direction. May play a role in development of the palate and the limbs. May modulate chromosome segregation. The protein is ATP-dependent DNA helicase Q4 (Recql4) of Mus musculus (Mouse).